A 182-amino-acid polypeptide reads, in one-letter code: Mu-like prophage FluMu protein gp45 (182 aa).

The tract at residues 159–182 (TDHQSSGISGKNHDHEERVGKPVP) is disordered. Positions 169–182 (KNHDHEERVGKPVP) are enriched in basic and acidic residues.

The protein to phage Mu protein gp45.

This chain is Mu-like prophage FluMu protein gp45, found in Haemophilus influenzae (strain ATCC 51907 / DSM 11121 / KW20 / Rd).